Reading from the N-terminus, the 103-residue chain is Cell division protein CrgA (103 aa).

The next 2 membrane-spanning stretches (helical) occupy residues 49–69 (FVPL…VYYL) and 80–100 (IGAW…LMTM).

The protein belongs to the CrgA family.

The protein resides in the cell membrane. Functionally, involved in cell division. This chain is Cell division protein CrgA, found in Bifidobacterium longum (strain NCC 2705).